Reading from the N-terminus, the 217-residue chain is Peptide methionine sulfoxide reductase MsrA (217 aa).

Cysteine 56 is an active-site residue.

The protein belongs to the MsrA Met sulfoxide reductase family.

The catalysed reaction is L-methionyl-[protein] + [thioredoxin]-disulfide + H2O = L-methionyl-(S)-S-oxide-[protein] + [thioredoxin]-dithiol. It carries out the reaction [thioredoxin]-disulfide + L-methionine + H2O = L-methionine (S)-S-oxide + [thioredoxin]-dithiol. Its function is as follows. Has an important function as a repair enzyme for proteins that have been inactivated by oxidation. Catalyzes the reversible oxidation-reduction of methionine sulfoxide in proteins to methionine. This chain is Peptide methionine sulfoxide reductase MsrA, found in Corynebacterium melassecola.